The sequence spans 640 residues: Threonine--tRNA ligase (640 aa).

The TGS domain occupies 1 to 61 (MPIIALPDGN…EKDSEVNIIT (61 aa)). The interval 242-533 (DHRRIAKQMS…LIEHYAGRLP (292 aa)) is catalytic. Residues Cys-333, His-384, and His-510 each contribute to the Zn(2+) site.

This sequence belongs to the class-II aminoacyl-tRNA synthetase family. Homodimer. Zn(2+) is required as a cofactor.

The protein resides in the cytoplasm. The catalysed reaction is tRNA(Thr) + L-threonine + ATP = L-threonyl-tRNA(Thr) + AMP + diphosphate + H(+). Functionally, catalyzes the attachment of threonine to tRNA(Thr) in a two-step reaction: L-threonine is first activated by ATP to form Thr-AMP and then transferred to the acceptor end of tRNA(Thr). Also edits incorrectly charged L-seryl-tRNA(Thr). The protein is Threonine--tRNA ligase of Prochlorococcus marinus (strain MIT 9313).